The primary structure comprises 727 residues: Phenylalanine ammonia-lyase str11 (727 aa).

Catalysis depends on Y105, which acts as the Proton donor/acceptor. Positions A210–G212 form a cross-link, 5-imidazolinone (Ala-Gly). S211 carries the 2,3-didehydroalanine (Ser) modification. (E)-cinnamate is bound by residues N271, Q361, R367, N397, K468, E496, and N499.

It belongs to the PAL/histidase family. In terms of processing, contains an active site 4-methylidene-imidazol-5-one (MIO), which is formed autocatalytically by cyclization and dehydration of residues Ala-Ser-Gly.

The catalysed reaction is L-phenylalanine = (E)-cinnamate + NH4(+). Its pathway is mycotoxin biosynthesis. Its function is as follows. Phenylalanine ammonia-lyase; part of the gene cluster that mediates the biosynthesis of strobilurin A, an antifungal polyketide that contains a key beta-methoxyacrylate toxophore that targets the complex III of the mitochondrial electron transport chain. Strobilurin biosynthesis begins with construction of benzoyl CoA by step-wise elimination of ammonia from phenylalanine by the phenylalanine ammonia-lyase str11, oxygenation by str8 and retro-Claisen reaction to form benzoic acid, which is activated to its CoA thiolester benzoyl CoA by the dedicated CoA ligase str10. Benzoyl CoA forms the starter unit for the highly reducing polyketide synthase stpks1 that produces the polyketide prestrobilutin A. The FAD-dependent oxygenase str9 then catalyzes the key oxidative rearrangement responsible for the creation of the beta-methoxyacrylate toxophore. Str9 performs epoxidation of the 2,3 olefin of prestrobilutin A, followed by Meinwald rearrangement to furnish the aldehyde intermediate. Rapid enolization of the aldehyde intermediate would give the beta-methoxyacrylate skeleton and methylations catalyzed by str2 and str3 complete the synthesis and lead to the production of strobilurin A. The short-chain dehydrogenase stl2 and the dehydrogenase str4 play a role in the shunt pathway leading to the production of bolineol. The cluster encodes no obvious halogenase gene that could be involved in production of strobilurin B, nor any obvious dimethylallyl-transferase that could be involved in the production of strobilurin G. It is possible that unknown proteins encoded in, or near, the cluster (such as str1 or stl1) may form new classes of halogenases or dimethylally-transferases, or that the responsible genes are located elsewhere on the genome. Similarly, proteins encoded by str5/str6 hydrolases appear to have no chemical role in the biosynthesis of strobilurin A. Finally, no obvious self-resistance gene is found within the cluster. The sequence is that of Phenylalanine ammonia-lyase str11 from Strobilurus tenacellus.